Reading from the N-terminus, the 432-residue chain is 3-phosphoshikimate 1-carboxyvinyltransferase (432 aa).

Residues K23, S24, and R28 each coordinate 3-phosphoshikimate. K23 contributes to the phosphoenolpyruvate binding site. Phosphoenolpyruvate contacts are provided by G95 and R123. Residues S167, Q169, D317, and K344 each coordinate 3-phosphoshikimate. Q169 contributes to the phosphoenolpyruvate binding site. D317 functions as the Proton acceptor in the catalytic mechanism. Positions 348 and 390 each coordinate phosphoenolpyruvate.

Belongs to the EPSP synthase family. In terms of assembly, monomer.

The protein localises to the cytoplasm. It catalyses the reaction 3-phosphoshikimate + phosphoenolpyruvate = 5-O-(1-carboxyvinyl)-3-phosphoshikimate + phosphate. The protein operates within metabolic intermediate biosynthesis; chorismate biosynthesis; chorismate from D-erythrose 4-phosphate and phosphoenolpyruvate: step 6/7. Functionally, catalyzes the transfer of the enolpyruvyl moiety of phosphoenolpyruvate (PEP) to the 5-hydroxyl of shikimate-3-phosphate (S3P) to produce enolpyruvyl shikimate-3-phosphate and inorganic phosphate. The sequence is that of 3-phosphoshikimate 1-carboxyvinyltransferase from Staphylococcus aureus (strain MRSA252).